The primary structure comprises 245 residues: 1-(5-phosphoribosyl)-5-[(5-phosphoribosylamino)methylideneamino] imidazole-4-carboxamide isomerase (245 aa).

The Proton acceptor role is filled by aspartate 7. Aspartate 129 (proton donor) is an active-site residue.

This sequence belongs to the HisA/HisF family.

The protein resides in the cytoplasm. The enzyme catalyses 1-(5-phospho-beta-D-ribosyl)-5-[(5-phospho-beta-D-ribosylamino)methylideneamino]imidazole-4-carboxamide = 5-[(5-phospho-1-deoxy-D-ribulos-1-ylimino)methylamino]-1-(5-phospho-beta-D-ribosyl)imidazole-4-carboxamide. The protein operates within amino-acid biosynthesis; L-histidine biosynthesis; L-histidine from 5-phospho-alpha-D-ribose 1-diphosphate: step 4/9. This Aliivibrio fischeri (strain ATCC 700601 / ES114) (Vibrio fischeri) protein is 1-(5-phosphoribosyl)-5-[(5-phosphoribosylamino)methylideneamino] imidazole-4-carboxamide isomerase.